The sequence spans 210 residues: Na(+)-translocating NADH-quinone reductase subunit D (210 aa).

6 consecutive transmembrane segments (helical) span residues 10–30, 42–62, 72–92, 103–123, 131–151, and 178–198; these read ILFAPFLDNNPIALQVLGVCS, FVMTLAVMFVTAFSNLFVSLI, IIVQMAIIASLVIVVDQVLKA, VFVGLIITNCIVMGRAEAYAM, FIDGVGNGLGYGFVLITVAFF, and NGLMLLAPSAFFLIGFMIWAI.

This sequence belongs to the NqrDE/RnfAE family. Composed of six subunits; NqrA, NqrB, NqrC, NqrD, NqrE and NqrF.

The protein resides in the cell inner membrane. The catalysed reaction is a ubiquinone + n Na(+)(in) + NADH + H(+) = a ubiquinol + n Na(+)(out) + NAD(+). In terms of biological role, NQR complex catalyzes the reduction of ubiquinone-1 to ubiquinol by two successive reactions, coupled with the transport of Na(+) ions from the cytoplasm to the periplasm. NqrA to NqrE are probably involved in the second step, the conversion of ubisemiquinone to ubiquinol. The chain is Na(+)-translocating NADH-quinone reductase subunit D from Photobacterium profundum (strain SS9).